The chain runs to 203 residues: Imidazole glycerol phosphate synthase subunit HisH (203 aa).

In terms of domain architecture, Glutamine amidotransferase type-1 spans 1-203 (MIGIIDYGMG…KNFGEMIKCL (203 aa)). C79 serves as the catalytic Nucleophile. Active-site residues include H181 and E183.

As to quaternary structure, heterodimer of HisH and HisF.

Its subcellular location is the cytoplasm. It carries out the reaction 5-[(5-phospho-1-deoxy-D-ribulos-1-ylimino)methylamino]-1-(5-phospho-beta-D-ribosyl)imidazole-4-carboxamide + L-glutamine = D-erythro-1-(imidazol-4-yl)glycerol 3-phosphate + 5-amino-1-(5-phospho-beta-D-ribosyl)imidazole-4-carboxamide + L-glutamate + H(+). It catalyses the reaction L-glutamine + H2O = L-glutamate + NH4(+). Its pathway is amino-acid biosynthesis; L-histidine biosynthesis; L-histidine from 5-phospho-alpha-D-ribose 1-diphosphate: step 5/9. Its function is as follows. IGPS catalyzes the conversion of PRFAR and glutamine to IGP, AICAR and glutamate. The HisH subunit catalyzes the hydrolysis of glutamine to glutamate and ammonia as part of the synthesis of IGP and AICAR. The resulting ammonia molecule is channeled to the active site of HisF. The sequence is that of Imidazole glycerol phosphate synthase subunit HisH from Caldanaerobacter subterraneus subsp. tengcongensis (strain DSM 15242 / JCM 11007 / NBRC 100824 / MB4) (Thermoanaerobacter tengcongensis).